A 312-amino-acid chain; its full sequence is Pyridoxal kinase (312 aa).

Met-1 carries the post-translational modification N-acetylmethionine. 2 residues coordinate pyridoxal: Ser-12 and Thr-47. Thr-47 provides a ligand contact to pyridoxal 5'-phosphate. Ser-59 is modified (phosphoserine). Position 113 (Asp-113) interacts with ATP. Asp-113 lines the Na(+) pocket. A Mg(2+)-binding site is contributed by Asp-118. Thr-148 contacts Na(+). 150 to 153 (NQFE) provides a ligand contact to ATP. Residue Ser-164 is modified to Phosphoserine. Residue Thr-186 participates in Na(+) binding. 186–187 (TS) lines the ATP pocket. At Ser-213 the chain carries Phosphoserine. Residues 226–228 (VEA) and Thr-233 contribute to the ATP site. 234–235 (GD) contributes to the pyridoxal 5'-phosphate binding site. Residue Asp-235 is the Proton acceptor of the active site. A Phosphoserine modification is found at Ser-285.

The protein belongs to the pyridoxine kinase family. Homodimer. The cofactor is Zn(2+). Requires Mg(2+) as cofactor.

The protein resides in the cytoplasm. It localises to the cytosol. The enzyme catalyses pyridoxal + ATP = pyridoxal 5'-phosphate + ADP + H(+). It catalyses the reaction pyridoxamine + ATP = pyridoxamine 5'-phosphate + ADP + H(+). It carries out the reaction pyridoxine + ATP = pyridoxine 5'-phosphate + ADP + H(+). The protein operates within cofactor metabolism; pyridoxal 5'-phosphate salvage; pyridoxal 5'-phosphate from pyridoxal: step 1/1. It participates in cofactor metabolism; pyridoxal 5'-phosphate salvage; pyridoxine 5'-phosphate from pyridoxine: step 1/1. Its pathway is cofactor metabolism; pyridoxal 5'-phosphate salvage; pyridoxamine 5'-phosphate from pyridoxamine: step 1/1. Its activity is regulated as follows. Activity is increased in the presence of K(+)or Na(+). In terms of biological role, catalyzes the phosphorylation of the dietary vitamin B6 vitamers pyridoxal (PL), pyridoxine (PN) and pyridoxamine (PM) to form pyridoxal 5'-phosphate (PLP), pyridoxine 5'-phosphate (PNP) and pyridoxamine 5'-phosphate (PMP), respectively. PLP is the active form of vitamin B6, and acts as a cofactor for over 140 different enzymatic reactions. In Mus musculus (Mouse), this protein is Pyridoxal kinase.